Reading from the N-terminus, the 67-residue chain is Large ribosomal subunit protein uL29 (67 aa).

The protein belongs to the universal ribosomal protein uL29 family.

This is Large ribosomal subunit protein uL29 from Agathobacter rectalis (strain ATCC 33656 / DSM 3377 / JCM 17463 / KCTC 5835 / VPI 0990) (Eubacterium rectale).